The following is a 723-amino-acid chain: MIYQADTLQVKEIQDGIAELSFCSPKSVNKLDLATLESLDKALDALTSHQGLKGLMLTSDKDAFIVGADITEFLGLFAKTDAELDQWLQFANSIFNKLEDLPVPTISVLKGHTLGGGCECVLATDMRIGDKTTSIGLPETKLGIMPGFGGCVRLPRVIGADSAMEIITQGKACRADEALKIGLLDAVVETDALYESALQTLTSAINEKIDWQARRKQKTSPLTLSKLESMMSFTMAKGLVAQVAGPHYPAPMTAVITIEEGARFARNEALDIERKYFVKLAKSEEAKALVGLFLNDQYIKGIAKKAAKSASKDTERAAVLGAGIMGGGIAYQSALKGVPVLMKDIAQPSLDLGMTEASKLLNKRLAQGRIDGFKMAGILASITPSLHYAGIENSDVIVEAVVENPKVKATVLSEVESHVGEDTVITSNTSTIPINLLAQSLKRPENFCGMHFFNPVHRMPLVEIIRGEKTSDETINRVVAYAAKMGKSPIVVNDCPGFFVNRVLFPYFGGFSMLLRDGADFTKVDKVMERKFGWPMGPAYLLDVVGIDTAHHAQAVMAEGFPERMGKQGRDAIDALFEANKYGQKNGNGFYSYTIDKKGKPKKTFTEDILPVLADVCADKQEFDEQTIIQRMMIPMINEVVLCLQEGIIATPQEADMALVYGLGFPPFRGGVFRYLDSVGIAEFVEMAKQHADLGAMYHVPQMLIDMAAKGESFYGAQQQGSI.

Positions 1-189 are enoyl-CoA hydratase/isomerase; sequence MIYQADTLQV…KIGLLDAVVE (189 aa). D296 contacts substrate. The 3-hydroxyacyl-CoA dehydrogenase stretch occupies residues 311 to 723; sequence SKDTERAAVL…FYGAQQQGSI (413 aa). NAD(+) contacts are provided by residues M325, D344, 401–403, K408, and S430; that span reads VVE. H451 acts as the For 3-hydroxyacyl-CoA dehydrogenase activity in catalysis. N454 is an NAD(+) binding site. N501 and Y661 together coordinate substrate.

In the N-terminal section; belongs to the enoyl-CoA hydratase/isomerase family. It in the C-terminal section; belongs to the 3-hydroxyacyl-CoA dehydrogenase family. Heterotetramer of two alpha chains (FadB) and two beta chains (FadA).

The enzyme catalyses a (3S)-3-hydroxyacyl-CoA + NAD(+) = a 3-oxoacyl-CoA + NADH + H(+). It carries out the reaction a (3S)-3-hydroxyacyl-CoA = a (2E)-enoyl-CoA + H2O. It catalyses the reaction a 4-saturated-(3S)-3-hydroxyacyl-CoA = a (3E)-enoyl-CoA + H2O. The catalysed reaction is (3S)-3-hydroxybutanoyl-CoA = (3R)-3-hydroxybutanoyl-CoA. The enzyme catalyses a (3Z)-enoyl-CoA = a 4-saturated (2E)-enoyl-CoA. It carries out the reaction a (3E)-enoyl-CoA = a 4-saturated (2E)-enoyl-CoA. The protein operates within lipid metabolism; fatty acid beta-oxidation. Its function is as follows. Involved in the aerobic and anaerobic degradation of long-chain fatty acids via beta-oxidation cycle. Catalyzes the formation of 3-oxoacyl-CoA from enoyl-CoA via L-3-hydroxyacyl-CoA. It can also use D-3-hydroxyacyl-CoA and cis-3-enoyl-CoA as substrate. The sequence is that of Fatty acid oxidation complex subunit alpha from Vibrio parahaemolyticus serotype O3:K6 (strain RIMD 2210633).